A 783-amino-acid chain; its full sequence is RNA exonuclease 5 (783 aa).

An Exonuclease domain is found at 230 to 378; it reads LFGLDCEMCL…EDARTTLELA (149 aa). 2 RRM domains span residues 503-577 and 598-677; these read STVY…RPVT and GTIY…RHLH.

The polypeptide is RNA exonuclease 5 (REXO5) (Bos taurus (Bovine)).